We begin with the raw amino-acid sequence, 189 residues long: MLVGYARVSTEEQSLNRQIDMLVDYGVDKRNIYQEKISGMKPNREQLDKMIDELQEGDTVIITDLTRISRSTKDLLNIIDRIKAKGASIKSIKDTWLDTSSDNPYNSFLLTVMSGLSQLERDLISQRTKEGLKSAKARGRNGGRPSKRNDKADTVGLLYREGYKIVDIVKQTGLSRATVYRVLNDLKLK.

One can recognise a Resolvase/invertase-type recombinase catalytic domain in the interval 1-139; it reads MLVGYARVST…EGLKSAKARG (139 aa). The active-site O-(5'-phospho-DNA)-serine intermediate is the S9. Positions 130–151 are disordered; sequence EGLKSAKARGRNGGRPSKRNDK. The segment at residues 165–184 is a DNA-binding region (H-T-H motif); the sequence is IVDIVKQTGLSRATVYRVLN.

The protein belongs to the site-specific recombinase resolvase family.

In terms of biological role, a likely role for the res protein would be to stabilize pIP404 by reducing the number of plasmid multimers resulting from homologous recombination. This is Resolvase (res) from Clostridium perfringens.